The chain runs to 249 residues: Small ribosomal subunit protein eS6 (249 aa).

Positions 216–229 (RMKEAKEKRQEQIA) are enriched in basic and acidic residues. The interval 216-249 (RMKEAKEKRQEQIAKRRRLSSLRASTSKSESSQK) is disordered. Phosphoserine is present on residues S235, S236, S240, S244, and S247. The span at 236 to 249 (SLRASTSKSESSQK) shows a compositional bias: low complexity.

This sequence belongs to the eukaryotic ribosomal protein eS6 family. Component of the small ribosomal subunit. In terms of processing, ribosomal protein S6 is the major substrate of protein kinases in eukaryote ribosomes. The phosphorylation is stimulated by growth factors, tumor promoting agents, and mitogens. It is dephosphorylated at growth arrest.

It is found in the cytoplasm. Component of the 40S small ribosomal subunit. Plays an important role in controlling cell growth and proliferation through the selective translation of particular classes of mRNA. The protein is Small ribosomal subunit protein eS6 (rps6) of Oncorhynchus mykiss (Rainbow trout).